The primary structure comprises 223 residues: Trichome differentiation protein GL1 (223 aa).

2 HTH myb-type domains span residues 11–63 (NQEY…MNYL) and 64–118 (SPNV…SKKL). 2 DNA-binding regions (H-T-H motif) span residues 39–63 (WNRI…MNYL) and 91–114 (WSLI…NTHL).

It is found in the nucleus. Functionally, regulates the production of a signal that induces hair (trichome) precursor cells on leaf primordia to differentiate. The chain is Trichome differentiation protein GL1 (GL1) from Arabidopsis lyrata (Lyre-leaved rock-cress).